Consider the following 195-residue polypeptide: Thymidine kinase (195 aa).

ATP is bound by residues 9–16 (STMNAGKS) and 87–90 (DEAQ). Residue Glu88 is the Proton acceptor of the active site. Positions 145, 147, 182, and 185 each coordinate Zn(2+).

It belongs to the thymidine kinase family. As to quaternary structure, homotetramer.

The protein resides in the cytoplasm. It catalyses the reaction thymidine + ATP = dTMP + ADP + H(+). This is Thymidine kinase from Mannheimia succiniciproducens (strain KCTC 0769BP / MBEL55E).